A 685-amino-acid chain; its full sequence is Phenoloxidase subunit 1 (685 aa).

His-209, His-213, and His-239 together coordinate Cu cation. Glu-351 serves as the catalytic Proton acceptor. Positions 366, 370, and 406 each coordinate Cu cation. 2 disulfides stabilise this stretch: Cys-580-Cys-622 and Cys-582-Cys-629.

In terms of assembly, heterodimer. Forms a complex with an interleukin 1-like protein as a consequence of a host defense response. Cu(2+) serves as cofactor. Post-translationally, the N-terminus is blocked. In terms of tissue distribution, synthesized by oenocytoids, a type of hemocyte, and released into the hemolymph plasma.

The protein resides in the secreted. The enzyme catalyses 2 L-dopa + O2 = 2 L-dopaquinone + 2 H2O. It catalyses the reaction L-tyrosine + O2 = L-dopaquinone + H2O. Its activity is regulated as follows. Activated by immulectin and lipopolysaccharide. Functionally, this is a copper-containing oxidase that functions in the formation of pigments such as melanins and other polyphenolic compounds. Catalyzes the rate-limiting conversions of tyrosine to DOPA, DOPA to DOPA-quinone and possibly 5,6 dihydroxyindole to indole-5'6 quinone. Binds to the surface of hemocytes and is involved in hemocyte melanization. This is Phenoloxidase subunit 1 from Manduca sexta (Tobacco hawkmoth).